The following is a 288-amino-acid chain: Glycine--tRNA ligase alpha subunit (288 aa).

Belongs to the class-II aminoacyl-tRNA synthetase family. In terms of assembly, tetramer of two alpha and two beta subunits.

The protein resides in the cytoplasm. It carries out the reaction tRNA(Gly) + glycine + ATP = glycyl-tRNA(Gly) + AMP + diphosphate. The polypeptide is Glycine--tRNA ligase alpha subunit (Rickettsia rickettsii (strain Iowa)).